Consider the following 973-residue polypeptide: MNFKENNIYSGFKLLNIENLNEIGGVGLRFEHEKTKAKLIKILSEDDNKCFAIGFRTPPENSTGVPHILEHSVLCGSRKFNTKEPFVELLKGSLNTFLNAMTYPDKTIYPVASRNEKDFMNLMDVYLDAVLYPNIYKHKEIFMQEGWHYYIENKEDELKYNGVVYNEMKGAYSSPDSILYRKIPQTIYPDTCYALSSGGDPDEIPNLTYEEFVEFHKKYYHPSNSYIFLYGNGDTEKELEFINEEYLKNFEYKEIDSEIKEQKSFESMKEESFTYGIAESEDLNHKSYYSLNFVIGDATDGEKGLAFDVLAYLLTRSTAAPLKKALIDAGIGKAVSGDFDNSTKQSAFTVLVKNAELNKEEEFKKVVMDTLKDLVENGIDKELIEASINRVEFELREGDYGSYPNGLIYYLKVMDSWLYDGDPYVHLEYEKNLEKIKSALTSNYFEDLIERYMINNTHSSLVSLHPEKGINEKKSAELKKKLEEIKNSFDEKTLNEIIDNCKKLKERQSTPDKKEDLESIPMLSLEDIDKEATKIPTEEKEIDGITTLHHDFHTNKIDYVNFFFNTNSVPEDLIPYVGLLCDILGKCGTENYDYSKLSNAINISTGGISFGAITFANLKKNNEFRPYLEISYKALSSKTNKAIELVDEIVNHTDLDDMDRIMQIIREKRARLEGAIFDSGHRIAMKKVLSYSTNRGAYDEKISGLDYYDFLVNIEKEDKKSTISDSLKKVRDLIFNKGNMLISYSGKEEEYENFKEKVKYLISKTNNNDFEKEEYNFELGKKNEGLLTQGNVQYVAKGGNYKTHGYKYSGALSLLESILGFDYLWNAVRVKGGAYGVFSNFRRDGGAYIVSYRDPNIKSTLEAYDNIPKYLNDFEADEREMTKYIIGTIRKYDQPISNGIKGDIAVSYYLSNFTYEDLQKEREEIINADVEKIKSFAPMIKDLMKEDYICVLGNEEKIKENKDLFNNIKSVIK.

The protein is Protein HypA (hypA) of Clostridium perfringens (strain 13 / Type A).